The primary structure comprises 142 residues: Large ribosomal subunit protein uL13 (142 aa).

Belongs to the universal ribosomal protein uL13 family. Part of the 50S ribosomal subunit.

In terms of biological role, this protein is one of the early assembly proteins of the 50S ribosomal subunit, although it is not seen to bind rRNA by itself. It is important during the early stages of 50S assembly. The protein is Large ribosomal subunit protein uL13 of Glaesserella parasuis serovar 5 (strain SH0165) (Haemophilus parasuis).